Consider the following 461-residue polypeptide: MSQGKVVQIIGAVVDLEFPQDAVPKVYDALKVTEGGLEGLVLEVQQQLGGGIVRAIAMGTTDGLRRGITAKNTGESIMVPVGKKTLGRIMDVLGNPIDEAGPIGEEEKMSIHRAAPSYEEQSNTNELLETGIKVIDLICPFAKGGKVGLFGGAGVGKTVNMMELIRNIAIEHSGYSVFAGVGERTREGNDFYHEMNDSNVLDKVSLVYGQMNEPPGNRLRVALTGLTIAEKFRDEGRDVLFFVDNIYRYTLAGTEVSALLGRMPSAVGYQPTLAEEMGVLQERITSTKTGSITSVQAVYVPADDLTDPSPATTFAHLDATVVLNRDIASLGIYPAVDPLDSTSRQLDPQVIGDEHYDTAMGVQEVLQRYKELKDIIAILGMDELSEEDKLSVSRARKIQRFLSQPFFVAEVFTGAPGKYVSLKDTIAGFKGILDGDYDDMPEQAFYMVGTIEEAVEKAKNL.

151–158 (GGAGVGKT) serves as a coordination point for ATP.

Belongs to the ATPase alpha/beta chains family. In terms of assembly, F-type ATPases have 2 components, CF(1) - the catalytic core - and CF(0) - the membrane proton channel. CF(1) has five subunits: alpha(3), beta(3), gamma(1), delta(1), epsilon(1). CF(0) has three main subunits: a(1), b(2) and c(9-12). The alpha and beta chains form an alternating ring which encloses part of the gamma chain. CF(1) is attached to CF(0) by a central stalk formed by the gamma and epsilon chains, while a peripheral stalk is formed by the delta and b chains.

The protein localises to the cell inner membrane. The enzyme catalyses ATP + H2O + 4 H(+)(in) = ADP + phosphate + 5 H(+)(out). Produces ATP from ADP in the presence of a proton gradient across the membrane. The catalytic sites are hosted primarily by the beta subunits. The polypeptide is ATP synthase subunit beta (Idiomarina loihiensis (strain ATCC BAA-735 / DSM 15497 / L2-TR)).